We begin with the raw amino-acid sequence, 166 residues long: 6,7-dimethyl-8-ribityllumazine synthase (166 aa).

5-amino-6-(D-ribitylamino)uracil is bound by residues phenylalanine 22, 56–58 (SME), and 80–82 (AVI). 85 to 86 (ET) is a (2S)-2-hydroxy-3-oxobutyl phosphate binding site. The active-site Proton donor is the histidine 88. Phenylalanine 113 is a 5-amino-6-(D-ribitylamino)uracil binding site. Residue arginine 127 coordinates (2S)-2-hydroxy-3-oxobutyl phosphate.

It belongs to the DMRL synthase family.

It catalyses the reaction (2S)-2-hydroxy-3-oxobutyl phosphate + 5-amino-6-(D-ribitylamino)uracil = 6,7-dimethyl-8-(1-D-ribityl)lumazine + phosphate + 2 H2O + H(+). It functions in the pathway cofactor biosynthesis; riboflavin biosynthesis; riboflavin from 2-hydroxy-3-oxobutyl phosphate and 5-amino-6-(D-ribitylamino)uracil: step 1/2. Catalyzes the formation of 6,7-dimethyl-8-ribityllumazine by condensation of 5-amino-6-(D-ribitylamino)uracil with 3,4-dihydroxy-2-butanone 4-phosphate. This is the penultimate step in the biosynthesis of riboflavin. The polypeptide is 6,7-dimethyl-8-ribityllumazine synthase (Thermotoga neapolitana (strain ATCC 49049 / DSM 4359 / NBRC 107923 / NS-E)).